The sequence spans 449 residues: UDP-N-acetylmuramoylalanine--D-glutamate ligase (449 aa).

118 to 124 (GTNGKTT) provides a ligand contact to ATP.

Belongs to the MurCDEF family.

Its subcellular location is the cytoplasm. The catalysed reaction is UDP-N-acetyl-alpha-D-muramoyl-L-alanine + D-glutamate + ATP = UDP-N-acetyl-alpha-D-muramoyl-L-alanyl-D-glutamate + ADP + phosphate + H(+). Its pathway is cell wall biogenesis; peptidoglycan biosynthesis. In terms of biological role, cell wall formation. Catalyzes the addition of glutamate to the nucleotide precursor UDP-N-acetylmuramoyl-L-alanine (UMA). The chain is UDP-N-acetylmuramoylalanine--D-glutamate ligase from Staphylococcus epidermidis (strain ATCC 35984 / DSM 28319 / BCRC 17069 / CCUG 31568 / BM 3577 / RP62A).